The sequence spans 145 residues: NADH-ubiquinone oxidoreductase subunit 8 (145 aa).

2 consecutive 4Fe-4S ferredoxin-type domains span residues 43–73 (LRFY…VRVG) and 83–112 (DWFT…HSLF). Cys-53, Cys-56, Cys-59, Cys-63, Cys-92, Cys-95, Cys-98, and Cys-102 together coordinate [4Fe-4S] cluster.

Belongs to the complex I 23 kDa subunit family. [4Fe-4S] cluster is required as a cofactor.

It is found in the mitochondrion. It carries out the reaction a ubiquinone + NADH + 5 H(+)(in) = a ubiquinol + NAD(+) + 4 H(+)(out). Core subunit of the mitochondrial membrane respiratory chain NADH dehydrogenase (Complex I) that is believed to belong to the minimal assembly required for catalysis. Complex I functions in the transfer of electrons from NADH to the respiratory chain. The immediate electron acceptor for the enzyme is believed to be ubiquinone. May donate electrons to ubiquinone. This chain is NADH-ubiquinone oxidoreductase subunit 8 (M-ISP1), found in Trypanosoma brucei brucei.